We begin with the raw amino-acid sequence, 4061 residues long: Hybrid PKS-NRPS synthetase tasS (4061 aa).

The Ketosynthase family 3 (KS3) domain occupies 7–472 (QEPIAVIGMA…GTNAHAIIEG (466 aa)). Cysteine 180 is a catalytic residue. The tract at residues 586 to 911 (VFTGQGAQWP…RQKNDVEELL (326 aa)) is malonyl-CoA:ACP transacylase (MAT) domain. Residues 977–1113 (HPLLGRRCVE…ATVNVTFHEP (137 aa)) form an N-terminal hotdog fold region. The dehydratase (DH) domain stretch occupies residues 977–1280 (HPLLGRRCVE…VRVQPFSVAG (304 aa)). The PKS/mFAS DH domain occupies 977-1282 (HPLLGRRCVE…VQPFSVAGPQ (306 aa)). Catalysis depends on histidine 1010, which acts as the Proton acceptor; for dehydratase activity. Positions 1128-1282 (LANAEPQRLY…VQPFSVAGPQ (155 aa)) are C-terminal hotdog fold. Residue aspartate 1188 is the Proton donor; for dehydratase activity of the active site. The methyltransferase (MT) domain stretch occupies residues 1425 to 1619 (LDRFYEEGFE…GFNGVETHTP (195 aa)). Positions 2153–2325 (TYFLLGLSGE…GVVGSDMAIG (173 aa)) are ketoreductase (KR) domain. The Carrier 1 domain maps to 2437-2516 (EAIKVVFDTF…LLVEEAVDKL (80 aa)). Residue serine 2475 is modified to O-(pantetheine 4'-phosphoryl)serine. Residues 2527–2617 (EHGGEPDLTQ…QKHQEQTSQS (91 aa)) are disordered. The segment covering 2556 to 2576 (TSAASSSDTGSDSSPTSNSVS) has biased composition (low complexity). Over residues 2577 to 2592 (ETQTGTPLETPMSTTE) the composition is skewed to polar residues. The interval 2632–3077 (QMTFGQNRFW…ELATWDTESE (446 aa)) is condensation (C) domain. The interval 3103 to 3510 (QVIADHPDAV…RGYLTVEGRI (408 aa)) is adenylation (A) (KR) domain. One can recognise a Carrier 2 domain in the interval 3633-3712 (QNLTATERTL…SMAALLDDGV (80 aa)). Serine 3672 carries the O-(pantetheine 4'-phosphoryl)serine modification. A reductase (RED) domain region spans residues 3813–3969 (DIDVVLHCAA…LSPLEDAVEA (157 aa)).

The protein in the C-terminal section; belongs to the NRP synthetase family.

It catalyses the reaction (2S,4S)-4-hydroxy-4-methylglutamate + 8 malonyl-CoA + 3 S-adenosyl-L-methionine + ATP + 8 NADPH + 11 H(+) = (2S)-3-[(2S)-3,5-dioxo-4-[(2E,4R,6R,8E,10E,12E)-4,6,12-trimethyltetradeca-2,8,10,12-tetraenoyl]pyrrolidin-2-yl]-2-hydroxy-2-methylpropanoate + AMP + 3 S-adenosyl-L-homocysteine + 8 CO2 + diphosphate + 8 NADP(+) + 8 CoA + 6 H2O. It participates in secondary metabolite biosynthesis. In terms of biological role, hybrid PKS-NRPS synthetase; part of the gene cluster that mediates the biosynthesis of the tetramic acids Sch210971 and Sch210972, potential anti-HIV fungal natural product that contain a decalin core. The PKS module of tasS together with the enoylreductase tasC catalyze the formation of the polyketide unit which is then conjugated to 4-hydroxyl-4-methyl glutamate (HMG) by the condensation domain of the tasS NRPS module. One unique structural feature of Sch210971 and Sch210972 is the tetramic acid motif proposed to be derived from the non-proteinogenic amino acid HMG, by a Dieckmann-type condensation catalyzed by the reductase domain of tasS. The aldolase tasA catalyzes the aldol condensation of 2 molecules of pyruvic acid to yield the intermediate 4-hydroxyl-4-methyl-2-oxoglutarate (HMOG), which can then be stereoselectively transaminated, may be by tasG, to form HMG. The Diels-Alderase tas3 then uses the Dieckmann product of tasS as substrate and catalyzes the Diels-Alder cycloaddition to form the decalin ring of Sch210971 and Sch210972. This Hapsidospora irregularis protein is Hybrid PKS-NRPS synthetase tasS.